The chain runs to 476 residues: Cysteine--tRNA ligase (476 aa).

Cys28 serves as a coordination point for Zn(2+). The 'HIGH' region signature appears at 30–40; the sequence is VTTYDFCHIGH. The Zn(2+) site is built by Cys215, His241, and Glu245. A 'KMSKS' region motif is present at residues 273 to 277; that stretch reads KMSKS. An ATP-binding site is contributed by Lys276.

This sequence belongs to the class-I aminoacyl-tRNA synthetase family. As to quaternary structure, monomer. It depends on Zn(2+) as a cofactor.

The protein localises to the cytoplasm. It catalyses the reaction tRNA(Cys) + L-cysteine + ATP = L-cysteinyl-tRNA(Cys) + AMP + diphosphate. This Buchnera aphidicola subsp. Cinara cedri (strain Cc) protein is Cysteine--tRNA ligase.